The following is a 338-amino-acid chain: Fructose-1,6-bisphosphatase class 1 (338 aa).

Residues Glu90, Asp112, Leu114, and Asp115 each contribute to the Mg(2+) site. Substrate contacts are provided by residues 115 to 118 (DGSS), Asn207, and Lys273. Residue Glu279 participates in Mg(2+) binding.

It belongs to the FBPase class 1 family. Homotetramer. The cofactor is Mg(2+).

It localises to the cytoplasm. The enzyme catalyses beta-D-fructose 1,6-bisphosphate + H2O = beta-D-fructose 6-phosphate + phosphate. It functions in the pathway carbohydrate biosynthesis; gluconeogenesis. The sequence is that of Fructose-1,6-bisphosphatase class 1 from Stenotrophomonas maltophilia (strain R551-3).